The chain runs to 258 residues: Indole-3-glycerol phosphate synthase (258 aa).

It belongs to the TrpC family.

It carries out the reaction 1-(2-carboxyphenylamino)-1-deoxy-D-ribulose 5-phosphate + H(+) = (1S,2R)-1-C-(indol-3-yl)glycerol 3-phosphate + CO2 + H2O. Its pathway is amino-acid biosynthesis; L-tryptophan biosynthesis; L-tryptophan from chorismate: step 4/5. The sequence is that of Indole-3-glycerol phosphate synthase from Chlorobium phaeobacteroides (strain DSM 266 / SMG 266 / 2430).